The following is a 97-amino-acid chain: Co-chaperonin GroES (97 aa).

This sequence belongs to the GroES chaperonin family. Heptamer of 7 subunits arranged in a ring. Interacts with the chaperonin GroEL.

It is found in the cytoplasm. In terms of biological role, together with the chaperonin GroEL, plays an essential role in assisting protein folding. The GroEL-GroES system forms a nano-cage that allows encapsulation of the non-native substrate proteins and provides a physical environment optimized to promote and accelerate protein folding. GroES binds to the apical surface of the GroEL ring, thereby capping the opening of the GroEL channel. This Burkholderia vietnamiensis protein is Co-chaperonin GroES.